Consider the following 316-residue polypeptide: Ribosomal RNA small subunit methyltransferase H (316 aa).

S-adenosyl-L-methionine-binding positions include 35–37 (AGH), D55, F84, D105, and Q112.

Belongs to the methyltransferase superfamily. RsmH family.

It is found in the cytoplasm. It catalyses the reaction cytidine(1402) in 16S rRNA + S-adenosyl-L-methionine = N(4)-methylcytidine(1402) in 16S rRNA + S-adenosyl-L-homocysteine + H(+). Its function is as follows. Specifically methylates the N4 position of cytidine in position 1402 (C1402) of 16S rRNA. The polypeptide is Ribosomal RNA small subunit methyltransferase H (Streptococcus suis (strain 05ZYH33)).